The following is a 1186-amino-acid chain: DNA excision repair protein ERCC-5 (1186 aa).

The interval 1 to 78 (MGVQGLWKLL…RIRPIFVFDG (78 aa)) is N-domain. The residue at position 8 (K8) is an N6-acetyllysine. D30 contacts Mg(2+). A DNA-binding; may bind to the undamaged single-strand DNA of the DNA repair bubble region spans residues 31–67 (ISIWLNQALKGVRDRHGNSIENPHLLTLFHRLCKLLF). Residue D77 coordinates Mg(2+). A spacer region region spans residues 79–785 (DAPLLKKQTL…LRLFGIPYIQ (707 aa)). 5 disordered regions span residues 306–342 (ESLP…PPSP), 354–385 (GSSS…SISP), 404–473 (CAGD…SVPK), 510–533 (HSDA…TNSV), and 667–724 (QAEF…AEDS). Basic and acidic residues predominate over residues 325-336 (PCEKLKTEKEPD). A Phosphoserine modification is found at S384. A compositionally biased stretch (basic and acidic residues) spans 454-472 (AEEHVASTNEGREPTDSVP). S705 is subject to Phosphoserine. The I-domain stretch occupies residues 786–881 (APMEAEAQCA…VTAMEILNEF (96 aa)). Residues E789, E791, D810, and D812 each contribute to the Mg(2+) site. A DNA-binding; may bind to the undamaged single-strand DNA of the DNA repair bubble region spans residues 820–836 (HVYRNFFNKNKFVEYYQ). Residues 848 to 880 (RNKLINLAYLLGSDYTEGIPTVGCVTAMEILNE) are DNA-binding; H2TH (helix-2turn-helix) motif which binds double-stranded DNA. Position 861 (D861) interacts with Mg(2+). The segment at 912-918 (TKVKKKL) is DNA-binding; may bind double-stranded DNA. Residues 981–1009 (LKQLDAQQTQLRIDSFFRLAQQEKEDAKR) form an interaction with PCNA region. An interaction with ERCC6/CSB region spans residues 1011–1186 (KSQRLNRAVT…RRARGRKRKT (176 aa)). Disordered stretches follow at residues 1056–1081 (QKRG…SKGK) and 1095–1186 (ESSD…KRKT). A Nuclear localization signal 1 motif is present at residues 1057–1074 (KRGITNTLEESSSLKRKR). Residues 1124 to 1133 (TSASDSQNSV) show a composition bias toward polar residues. Residues 1169-1186 (FGKKRRKLRRARGRKRKT) carry the Nuclear localization signal 2 motif. Over residues 1169–1186 (FGKKRRKLRRARGRKRKT) the composition is skewed to basic residues.

It belongs to the XPG/RAD2 endonuclease family. XPG subfamily. As to quaternary structure, monomer. Homodimer. Component of the homologous recombination repair (HR) complex composed of ERCC5/XPG, BRCA2, PALB2, DSS1 and RAD51. Within the complex, interacts with BRCA2 and PALB2. Interacts with RNA polymerase II. Interacts (via C-terminus) with ERCC6/CSB; the interaction stimulates ERCC6/CSB binding to the DNA repair bubble and ERCC6/CSB ATPase activity. May form a complex composed of RNA polymerase II, ERCC6/CSB and ERCC5/XPG which associates with the DNA repair bubble during transcription-coupled nucleotide excision repair. Interacts with BRCA1; the interaction promotes the release of BRCA1 from DNA. Interacts with PCNA. Interacts with NTHL1; the interaction stimulates NTHL1 activity and NTHL1 binding to its DNA substrate. Mg(2+) is required as a cofactor.

It is found in the nucleus. The protein resides in the chromosome. Single-stranded structure-specific DNA endonuclease involved in DNA excision repair. Makes the 3'incision in DNA nucleotide excision repair (NER). Binds and bends DNA repair bubble substrate and breaks base stacking at the single-strand/double-strand DNA junction of the DNA bubble. Plays a role in base excision repair (BER) by promoting the binding of DNA glycosylase NTHL1 to its substrate and increasing NTHL1 catalytic activity that removes oxidized pyrimidines from DNA. Involved in transcription-coupled nucleotide excision repair (TCR) which allows RNA polymerase II-blocking lesions to be rapidly removed from the transcribed strand of active genes. Functions during the initial step of TCR in cooperation with ERCC6/CSB to recognized stalled RNA polymerase II. Also, stimulates ERCC6/CSB binding to the DNA repair bubble and ERCC6/CSB ATPase activity. Required for DNA replication fork maintenance and preservation of genomic stability. Involved in homologous recombination repair (HRR) induced by DNA replication stress by recruiting RAD51, BRCA2, and PALB2 to the damaged DNA site. In TFIIH stimulates the 5'-3' helicase activity of XPD/ERCC2 and the DNA translocase activity of XPB/ERCC3. During HRR, binds to the replication fork with high specificity and stabilizes it. Also, acts upstream of HRR, to promote the release of BRCA1 from DNA. This chain is DNA excision repair protein ERCC-5 (ERCC5), found in Homo sapiens (Human).